Consider the following 416-residue polypeptide: MVIKKTTPGLMSGTMLIIATVIGGGMFSLPIAMAGIWFPGASIILTLIAIMMLLTGLMLVEVNLHYGGGASFNTFTQDLLGHKWNVVVGIAFGFVLYILTYAYISGSSAVISQTVEKYSGFYLPARLSVIIVSVLVGGIAWYSSLLVGRITTVLIIGKFVAFFATFSGLIWHVEGAKLIDSAAWALPDTQYLPYILMTLPFCIISYGFHGNVPSLVKLYGTQGVKNITRSIFIGTAFALLLYIFWLVVTMGNISRADFSPIIAKGGNIDVFVEAIGGLFTSTSMDLILTFFGNFAVASSLLAATLGLFDYIADLFHFSDDRSGRFKTALVTYLPPAVVCFILPGGFVYAIGYAGLAFTIWSVILPPFLVKAARKRFPTAVYTAPCNNMILNLVIVVGGFVYLTVVLDVFRLLPSFS.

The next 11 helical transmembrane spans lie at 13–33, 34–54, 86–106, 127–147, 153–173, 192–212, 231–251, 260–280, 286–306, 337–357, and 389–409; these read GTML…PIAM, AGIW…MMLL, VVVG…YISG, LSVI…SLLV, VLII…IWHV, LPYI…HGNV, IFIG…VTMG, PIIA…GLFT, LILT…ATLG, VVCF…GLAF, and ILNL…LDVF.

The protein belongs to the amino acid/polyamine transporter 2 family. Mtr/TnaB/TyrP permease subfamily.

The protein resides in the cell inner membrane. The protein is Tyrosine permease (tutB) of Enterobacter agglomerans (Erwinia herbicola).